Here is a 100-residue protein sequence, read N- to C-terminus: NADH-quinone oxidoreductase subunit K (100 aa).

Transmembrane regions (helical) follow at residues 4–24, 29–49, and 60–80; these read LSYS…GIMI, LFLL…FVIV, and VMYI…LALL.

The protein belongs to the complex I subunit 4L family. As to quaternary structure, NDH-1 is composed of 14 different subunits. Subunits NuoA, H, J, K, L, M, N constitute the membrane sector of the complex.

Its subcellular location is the cell membrane. The enzyme catalyses a quinone + NADH + 5 H(+)(in) = a quinol + NAD(+) + 4 H(+)(out). Its function is as follows. NDH-1 shuttles electrons from NADH, via FMN and iron-sulfur (Fe-S) centers, to quinones in the respiratory chain. The immediate electron acceptor for the enzyme in this species is believed to be ubiquinone. Couples the redox reaction to proton translocation (for every two electrons transferred, four hydrogen ions are translocated across the cytoplasmic membrane), and thus conserves the redox energy in a proton gradient. The polypeptide is NADH-quinone oxidoreductase subunit K (Baumannia cicadellinicola subsp. Homalodisca coagulata).